Reading from the N-terminus, the 322-residue chain is Secreted effector protein SseI (322 aa).

Interacts with host IQGAP1 and host TRIP6 (thyroid receptor-interacting protein 6).

Its subcellular location is the secreted. It localises to the host cytoplasm. Its function is as follows. Effector proteins function to alter host cell physiology and promote bacterial survival in host tissues. This protein is required to maintain a long-term chronic systemic infection in mice. It inhibits normal cell migration of primary macrophages and dendritic cells, by a mechanism that involves interaction with the host factor IQGAP1, an important regulator of the cytoskeleton and cell migration. Also accelerates the systemic spread of infection from the gastrointestinal tract to the bloodstream, probably by interacting with host TRIP6. This Salmonella typhimurium (strain LT2 / SGSC1412 / ATCC 700720) protein is Secreted effector protein SseI (sseI).